Consider the following 255-residue polypeptide: Biotin carboxyl carrier protein of acetyl-CoA carboxylase 2, chloroplastic (255 aa).

Residues 1-87 (MASLSVPCVK…TNVPEPAELS (87 aa)) constitute a chloroplast transit peptide. Residues 148–193 (PPAQPVALPPSPTPTSTPATAKPTSAPSSSHPPLKSPMAGTFYRSP) form a disordered region. Positions 149–162 (PAQPVALPPSPTPT) are enriched in pro residues. Positions 163–180 (STPATAKPTSAPSSSHPP) are enriched in low complexity. The region spanning 178-254 (HPPLKSPMAG…SVDTPLFVIA (77 aa)) is the Biotinyl-binding domain. Lys-220 is subject to N6-biotinyllysine.

As to quaternary structure, acetyl-CoA carboxylase is a heterohexamer composed of biotin carboxyl carrier protein, biotin carboxylase and 2 subunits each of ACCase subunit alpha and ACCase plastid-coded subunit beta (accD). Primarily expressed in 7 to 10 days after flowering seeds at levels approximately 2-fold less abundant than BCCP1.

The protein resides in the plastid. The protein localises to the chloroplast. The protein operates within lipid metabolism; fatty acid biosynthesis. Its function is as follows. This protein is a component of the acetyl coenzyme A carboxylase complex; first, biotin carboxylase catalyzes the carboxylation of the carrier protein and then the transcarboxylase transfers the carboxyl group to form malonyl-CoA. The chain is Biotin carboxyl carrier protein of acetyl-CoA carboxylase 2, chloroplastic (BCCP2) from Arabidopsis thaliana (Mouse-ear cress).